Here is a 417-residue protein sequence, read N- to C-terminus: Gamma-glutamyl phosphate reductase (417 aa).

It belongs to the gamma-glutamyl phosphate reductase family.

The protein localises to the cytoplasm. It catalyses the reaction L-glutamate 5-semialdehyde + phosphate + NADP(+) = L-glutamyl 5-phosphate + NADPH + H(+). The protein operates within amino-acid biosynthesis; L-proline biosynthesis; L-glutamate 5-semialdehyde from L-glutamate: step 2/2. In terms of biological role, catalyzes the NADPH-dependent reduction of L-glutamate 5-phosphate into L-glutamate 5-semialdehyde and phosphate. The product spontaneously undergoes cyclization to form 1-pyrroline-5-carboxylate. The protein is Gamma-glutamyl phosphate reductase of Hydrogenovibrio crunogenus (strain DSM 25203 / XCL-2) (Thiomicrospira crunogena).